A 389-amino-acid polypeptide reads, in one-letter code: Putative cyclin-F3-1 (389 aa).

Residues 1 to 103 form a disordered region; the sequence is MEAAAAAAAE…GAAGGSRQPV (103 aa). Residues 19-43 are compositionally biased toward low complexity; the sequence is VEGAAVAAVAPEAAAEGPSEPNAGE.

This sequence belongs to the cyclin family. Cyclin F subfamily.

This Oryza sativa subsp. japonica (Rice) protein is Putative cyclin-F3-1 (CYCF3-1).